The chain runs to 162 residues: UPF0178 protein RSKD131_2223 (162 aa).

The protein belongs to the UPF0178 family.

The sequence is that of UPF0178 protein RSKD131_2223 from Cereibacter sphaeroides (strain KD131 / KCTC 12085) (Rhodobacter sphaeroides).